Consider the following 291-residue polypeptide: N-acetylmannosamine kinase (291 aa).

ATP contacts are provided by residues 5–12 and 132–139; these read AIDIGGTK and GVGGGVVS. Zn(2+) contacts are provided by His-156, Cys-166, Cys-168, and Cys-173.

Belongs to the ROK (NagC/XylR) family. NanK subfamily. As to quaternary structure, homodimer.

It carries out the reaction an N-acyl-D-mannosamine + ATP = an N-acyl-D-mannosamine 6-phosphate + ADP + H(+). It functions in the pathway amino-sugar metabolism; N-acetylneuraminate degradation; D-fructose 6-phosphate from N-acetylneuraminate: step 2/5. Its function is as follows. Catalyzes the phosphorylation of N-acetylmannosamine (ManNAc) to ManNAc-6-P. In Escherichia coli (strain K12 / MC4100 / BW2952), this protein is N-acetylmannosamine kinase.